Reading from the N-terminus, the 288-residue chain is UDP-3-O-acyl-N-acetylglucosamine deacetylase (288 aa).

Positions 79, 236, and 240 each coordinate Zn(2+). Residue His-263 is the Proton donor of the active site.

Belongs to the LpxC family. It depends on Zn(2+) as a cofactor.

It catalyses the reaction a UDP-3-O-[(3R)-3-hydroxyacyl]-N-acetyl-alpha-D-glucosamine + H2O = a UDP-3-O-[(3R)-3-hydroxyacyl]-alpha-D-glucosamine + acetate. The protein operates within glycolipid biosynthesis; lipid IV(A) biosynthesis; lipid IV(A) from (3R)-3-hydroxytetradecanoyl-[acyl-carrier-protein] and UDP-N-acetyl-alpha-D-glucosamine: step 2/6. Functionally, catalyzes the hydrolysis of UDP-3-O-myristoyl-N-acetylglucosamine to form UDP-3-O-myristoylglucosamine and acetate, the committed step in lipid A biosynthesis. The protein is UDP-3-O-acyl-N-acetylglucosamine deacetylase of Rickettsia felis (strain ATCC VR-1525 / URRWXCal2) (Rickettsia azadi).